Reading from the N-terminus, the 488-residue chain is Bifunctional protein HldE (488 aa).

Residues 1-327 are ribokinase; the sequence is MDDTLAKLPR…GLAHGEHADP (327 aa). An ATP-binding site is contributed by 201–204; sequence NRRE. Asp272 is an active-site residue. The cytidylyltransferase stretch occupies residues 354-488; the sequence is FTNGCFDLLH…GRMNAPAVGG (135 aa).

The protein in the N-terminal section; belongs to the carbohydrate kinase PfkB family. It in the C-terminal section; belongs to the cytidylyltransferase family. Homodimer.

It carries out the reaction D-glycero-beta-D-manno-heptose 7-phosphate + ATP = D-glycero-beta-D-manno-heptose 1,7-bisphosphate + ADP + H(+). The enzyme catalyses D-glycero-beta-D-manno-heptose 1-phosphate + ATP + H(+) = ADP-D-glycero-beta-D-manno-heptose + diphosphate. It participates in nucleotide-sugar biosynthesis; ADP-L-glycero-beta-D-manno-heptose biosynthesis; ADP-L-glycero-beta-D-manno-heptose from D-glycero-beta-D-manno-heptose 7-phosphate: step 1/4. The protein operates within nucleotide-sugar biosynthesis; ADP-L-glycero-beta-D-manno-heptose biosynthesis; ADP-L-glycero-beta-D-manno-heptose from D-glycero-beta-D-manno-heptose 7-phosphate: step 3/4. Functionally, catalyzes the phosphorylation of D-glycero-D-manno-heptose 7-phosphate at the C-1 position to selectively form D-glycero-beta-D-manno-heptose-1,7-bisphosphate. In terms of biological role, catalyzes the ADP transfer from ATP to D-glycero-beta-D-manno-heptose 1-phosphate, yielding ADP-D-glycero-beta-D-manno-heptose. The protein is Bifunctional protein HldE of Caulobacter sp. (strain K31).